The sequence spans 154 residues: MTETIYSGLKQLGGATLLPESPDKAELERVRNPQADVAYNVRFTAPEFTSLCPMTGQPDFAHLVIDYVPGEWLVESKSLKLYLGSFRNHGAFHEDCTVSIGRRLAGFLAPRWLRIGGYWYPRGGMPIDVFWQTGPMPEGVWIPDQDVPPYRGRG.

Cysteine 52 functions as the Thioimide intermediate in the catalytic mechanism. Catalysis depends on aspartate 59, which acts as the Proton donor. Residues 74 to 76 and 93 to 94 contribute to the substrate site; these read VES and HE.

This sequence belongs to the GTP cyclohydrolase I family. QueF type 1 subfamily.

It localises to the cytoplasm. It carries out the reaction 7-aminomethyl-7-carbaguanine + 2 NADP(+) = 7-cyano-7-deazaguanine + 2 NADPH + 3 H(+). It functions in the pathway tRNA modification; tRNA-queuosine biosynthesis. In terms of biological role, catalyzes the NADPH-dependent reduction of 7-cyano-7-deazaguanine (preQ0) to 7-aminomethyl-7-deazaguanine (preQ1). The sequence is that of NADPH-dependent 7-cyano-7-deazaguanine reductase from Paracoccus denitrificans (strain Pd 1222).